Here is a 37-residue protein sequence, read N- to C-terminus: Non-specific lipid-transfer protein P4 (37 aa).

It belongs to the plant LTP family.

It is found in the secreted. In terms of biological role, plant non-specific lipid-transfer proteins transfer phospholipids as well as galactolipids across membranes. May play a role in wax or cutin deposition in the cell walls of expanding epidermal cells and certain secretory tissues. This Vitis sp. (Grape) protein is Non-specific lipid-transfer protein P4.